A 158-amino-acid chain; its full sequence is Protein hunchback (158 aa).

A compositionally biased stretch (basic residues) spans 18-34 (HNHHHHHHHGHHQHQQR). Disordered stretches follow at residues 18–96 (HNHH…TTTA) and 118–158 (LTPP…KYMA). Polar residues predominate over residues 41 to 50 (ASSPHQSPLP). Residues 52–65 (LQLEQYLKQQQQQP) are compositionally biased toward low complexity. The segment covering 139-158 (EPEKEHDLMSNSSEDMKYMA) has biased composition (basic and acidic residues).

This sequence belongs to the hunchback C2H2-type zinc-finger protein family.

It is found in the nucleus. Functionally, gap class segmentation protein that controls development of head structures. This is Protein hunchback (hb) from Drosophila mimica (Fruit fly).